Reading from the N-terminus, the 215-residue chain is MPIQPPSKGTLYIVSAPSGAGKTSLVRALLERVAGIQVSVSHTTRAMRPGEQNGINYHFVDVATFERLIESGDFIEHARVFDNYYGTSRAAVQALLDAGQDVILEIDWQGARQVREAFDEAVSIFILPPSREALHARLAGRGTDDAATIARRMRDAVDEMSHYDEYEHVIINDTFDHALDELSCLVHAQRTRMPRVQAEHAPLLAALLSRVEDVE.

The 179-residue stretch at 9–187 folds into the Guanylate kinase-like domain; it reads GTLYIVSAPS…ALDELSCLVH (179 aa). Residue 16–23 participates in ATP binding; the sequence is APSGAGKT.

Belongs to the guanylate kinase family.

It localises to the cytoplasm. It carries out the reaction GMP + ATP = GDP + ADP. Its function is as follows. Essential for recycling GMP and indirectly, cGMP. The protein is Guanylate kinase of Chromohalobacter salexigens (strain ATCC BAA-138 / DSM 3043 / CIP 106854 / NCIMB 13768 / 1H11).